The following is a 569-amino-acid chain: Beta-lactamase-like protein 4 (569 aa).

The signal sequence occupies residues 1–19 (MKYYLYLFLLFTFANLLYS). Asparagine 87, asparagine 172, asparagine 239, asparagine 240, asparagine 250, asparagine 299, asparagine 343, asparagine 412, asparagine 419, asparagine 436, asparagine 468, asparagine 509, and asparagine 535 each carry an N-linked (GlcNAc...) asparagine glycan.

The protein belongs to the beta-lactamase family.

The protein localises to the secreted. The sequence is that of Beta-lactamase-like protein 4 from Dictyostelium discoideum (Social amoeba).